Reading from the N-terminus, the 623-residue chain is DEAD-box ATP-dependent RNA helicase 52C (623 aa).

The interval methionine 1–aspartate 120 is disordered. Residues alanine 10 to alanine 29 are compositionally biased toward low complexity. Pro residues predominate over residues alanine 54–alanine 69. Low complexity predominate over residues alanine 70 to methionine 83. Residues glycine 84 to glycine 97 show a composition bias toward gly residues. The Q motif signature appears at glycine 155–arginine 183. A Helicase ATP-binding domain is found at isoleucine 186–leucine 372. ATP is bound at residue alanine 199–threonine 206. The DEAD box signature appears at aspartate 316–aspartate 319. In terms of domain architecture, Helicase C-terminal spans histidine 399–alanine 550. Positions proline 553–serine 595 are disordered. Residues tyrosine 555–phenylalanine 571 show a composition bias toward gly residues. A compositionally biased stretch (basic and acidic residues) spans glycine 572–serine 581. The segment covering glycine 583–serine 595 has biased composition (gly residues).

It belongs to the DEAD box helicase family. DDX3/DED1 subfamily.

The enzyme catalyses ATP + H2O = ADP + phosphate + H(+). This Oryza sativa subsp. japonica (Rice) protein is DEAD-box ATP-dependent RNA helicase 52C.